The chain runs to 305 residues: Dermonecrotic toxin LiSicTox-alphaII1 (305 aa).

The N-terminal stretch at 1–18 is a signal peptide; the sequence is MLLHIALILGCWSVFSEG. The propeptide occupies 19–26; the sequence is AETDVAER. Residue His-38 is part of the active site. Mg(2+)-binding residues include Glu-58 and Asp-60. The active-site Nucleophile is the His-74. Cystine bridges form between Cys-78–Cys-84 and Cys-80–Cys-223. Mg(2+) is bound at residue Asp-118.

Belongs to the arthropod phospholipase D family. Class II subfamily. Class IIa sub-subfamily. Mg(2+) serves as cofactor. Expressed by the venom gland.

The protein localises to the secreted. It catalyses the reaction an N-(acyl)-sphingosylphosphocholine = an N-(acyl)-sphingosyl-1,3-cyclic phosphate + choline. The enzyme catalyses an N-(acyl)-sphingosylphosphoethanolamine = an N-(acyl)-sphingosyl-1,3-cyclic phosphate + ethanolamine. It carries out the reaction a 1-acyl-sn-glycero-3-phosphocholine = a 1-acyl-sn-glycero-2,3-cyclic phosphate + choline. The catalysed reaction is a 1-acyl-sn-glycero-3-phosphoethanolamine = a 1-acyl-sn-glycero-2,3-cyclic phosphate + ethanolamine. Functionally, dermonecrotic toxins cleave the phosphodiester linkage between the phosphate and headgroup of certain phospholipids (sphingolipid and lysolipid substrates), forming an alcohol (often choline) and a cyclic phosphate. This toxin acts on sphingomyelin (SM) wih high activity. It may also act on ceramide phosphoethanolamine (CPE), lysophosphatidylcholine (LPC) and lysophosphatidylethanolamine (LPE), but not on lysophosphatidylserine (LPS), and lysophosphatidylglycerol (LPG). It acts by transphosphatidylation, releasing exclusively cyclic phosphate products as second products. Shows high hemolytic activity. Causes dermonecrosis, induces inflammatory response, platelet aggregation and increases vessel permeability. Shows no lethality when injected at higher dose into mice. May cause complement-dependent hemolysis as well as in a complement-independent manner. The hemolysis provoked in a complement-independent manner may be composed of several steps. The toxin may bind to erythrocyte membranes, may hydrolyze membrane phospholipids (SM and LPC) thus generating metabolism products that may cause hemolysis, probably by provoking an increase of calcium inside cells. The calcium influx may be due to the opening of L-type calcium channels, since L-type calcium channel blockers inhibit calcium influx. This Loxosceles intermedia (Brown spider) protein is Dermonecrotic toxin LiSicTox-alphaII1.